The following is a 534-amino-acid chain: Zinc finger protein 69 homolog B (534 aa).

Residues Lys-37 and Lys-40 each participate in a glycyl lysine isopeptide (Lys-Gly) (interchain with G-Cter in SUMO2) cross-link. In terms of domain architecture, KRAB spans 74-145 (LTFKDVSVDF…ERDISGVPSS (72 aa)). Residues Lys-178 and Lys-235 each participate in a glycyl lysine isopeptide (Lys-Gly) (interchain with G-Cter in SUMO2) cross-link. 9 consecutive C2H2-type zinc fingers follow at residues 279 to 301 (FECNICEKIFKQLIHLTEHMRIH), 307 to 329 (FRCKECGKAFSQSSSLIPHQRIH), 335 to 357 (YECKECGKTFRHPSSLTQHVRIH), 363 to 385 (YECRVCEKAFSQSIGLIQHLRTH), 391 to 413 (FTCKDCGKAFFQIRHLRQHEIIH), 419 to 441 (YICNVCSKTFSHSTYLTQHQRTH), 447 to 469 (YKCKECGKAFSQRIHLSIHQRVH), 475 to 497 (YECSHCGKAFRHDSSFAKHQRIH), and 503 to 525 (YDCNECGKAFSCSSSLIRHCKTH).

It belongs to the krueppel C2H2-type zinc-finger protein family.

It is found in the nucleus. In terms of biological role, may be involved in transcriptional regulation. Essential for Golgi structural integrity. This Homo sapiens (Human) protein is Zinc finger protein 69 homolog B (ZFP69B).